The sequence spans 264 residues: Major prion protein (264 aa).

The first 24 residues, 1 to 24, serve as a signal peptide directing secretion; sequence MVKRHIGSWILVLFVVMWSDVGLC. Positions 25–241 are interaction with GRB2, ERI3 and SYN1; that stretch reads KKRPKPGGGW…ESQAYYQRGA (217 aa). The tract at residues 27–119 is disordered; that stretch reads RPKPGGGWNT…WNKPSKPKTN (93 aa). Tandem repeats lie at residues 54 to 62, 63 to 70, 71 to 78, 79 to 86, 87 to 94, and 95 to 103. The 6 X 8 AA tandem repeats of P-H-G-G-G-W-G-Q stretch occupies residues 54-103; that stretch reads SQGGGGWGQPHGGGWGQPHGGGWGQPHGGGWGQPHGGGWGQPHGGGGWGQ. The segment covering 55–105 has biased composition (gly residues); it reads QGGGGWGQPHGGGWGQPHGGGWGQPHGGGWGQPHGGGWGQPHGGGGWGQGG. 12 residues coordinate Cu(2+): His-72, Gly-73, Gly-74, His-80, Gly-81, Gly-82, His-88, Gly-89, Gly-90, His-96, Gly-98, and Gly-99. A disulfide bond links Cys-190 and Cys-225. 2 N-linked (GlcNAc...) asparagine glycosylation sites follow: Asn-192 and Asn-208. Residue Ala-241 is the site of GPI-anchor amidated alanine attachment. Positions 242 to 264 are cleaved as a propeptide — removed in mature form; sequence SVILFSSPPVILLISLLIFLIVG.

The protein belongs to the prion family. In terms of assembly, monomer and homodimer. Has a tendency to aggregate into amyloid fibrils containing a cross-beta spine, formed by a steric zipper of superposed beta-strands. Soluble oligomers may represent an intermediate stage on the path to fibril formation. Copper binding may promote oligomerization. Interacts with GRB2, APP, ERI3/PRNPIP and SYN1. Mislocalized cytosolically exposed PrP interacts with MGRN1; this interaction alters MGRN1 subcellular location and causes lysosomal enlargement. Interacts with KIAA1191.

The protein resides in the cell membrane. It is found in the golgi apparatus. Its primary physiological function is unclear. Has cytoprotective activity against internal or environmental stresses. May play a role in neuronal development and synaptic plasticity. May be required for neuronal myelin sheath maintenance. May play a role in iron uptake and iron homeostasis. Soluble oligomers are toxic to cultured neuroblastoma cells and induce apoptosis (in vitro). Association with GPC1 (via its heparan sulfate chains) targets PRNP to lipid rafts. Also provides Cu(2+) or Zn(2+) for the ascorbate-mediated GPC1 deaminase degradation of its heparan sulfate side chains. In Bubalus bubalis (Domestic water buffalo), this protein is Major prion protein (PRNP).